Consider the following 360-residue polypeptide: uncharacterized protein (360 aa).

The ABC transporter domain occupies 4–235 (LSLQHIQKIY…PANMFVSGFI (232 aa)). 37 to 44 (GPSGCGKS) provides a ligand contact to ATP.

This sequence belongs to the ABC transporter superfamily.

This is an uncharacterized protein from Escherichia coli (strain K12).